The chain runs to 214 residues: ATP-dependent Clp protease proteolytic subunit 2 (214 aa).

The active-site Nucleophile is Ser-110. His-135 is a catalytic residue.

The protein belongs to the peptidase S14 family. Fourteen ClpP subunits assemble into 2 heptameric rings which stack back to back to give a disk-like structure with a central cavity, resembling the structure of eukaryotic proteasomes.

It is found in the cytoplasm. It carries out the reaction Hydrolysis of proteins to small peptides in the presence of ATP and magnesium. alpha-casein is the usual test substrate. In the absence of ATP, only oligopeptides shorter than five residues are hydrolyzed (such as succinyl-Leu-Tyr-|-NHMec, and Leu-Tyr-Leu-|-Tyr-Trp, in which cleavage of the -Tyr-|-Leu- and -Tyr-|-Trp bonds also occurs).. Functionally, cleaves peptides in various proteins in a process that requires ATP hydrolysis. Has a chymotrypsin-like activity. Plays a major role in the degradation of misfolded proteins. This chain is ATP-dependent Clp protease proteolytic subunit 2, found in Mycobacterium bovis (strain ATCC BAA-935 / AF2122/97).